The following is a 783-amino-acid chain: Type 4 coupling protein DotL (783 aa).

A helical transmembrane segment spans residues 47 to 67; sequence VSYYFSEAATFLLIMGGIFFL. Residues 100–500 are ATPase domain; it reads NIARGITFFG…ICMKLEDPTE (401 aa). The interval 671–773 is interaction with IcmS/IcmW; the sequence is VEGALTIFSK…SAKISAEREK (103 aa).

As to quaternary structure, the T4BSS is a complex nanomachine composed of several subcomplexes. This subunit is part of the Type IV Coupling Complex (T4CC), a subcomplex composed of the DotLMNYZ core and the IcmSW-LvgA adapter subunits, linked by the C-terminal tail of DotL. Six DotLMNYZ hetero-pentameric units may assemble into a hexameric nanomachine, forming an inner membrane channel for effectors to pass through. Interacts directly with DotM. Interacts directly, via its C-terminal region, with the type IV adapter proteins IcmS and IcmW. Also interacts with DotN and LvgA via its C-terminal region.

The protein resides in the cell inner membrane. Its function is as follows. Component of the Dot/Icm type IVB secretion system (T4BSS), which is used to inject bacterial effector proteins into eukaryotic host cells. Part of a subcomplex which recruits effector proteins and delivers them to the core transmembrane subcomplex. Plays a central role in the assembly of the subcomplex. Required for the recruitment of IcmS and IcmW to the inner membrane and for the translocation of adapter-dependent substrates. May have ATPase activity. The chain is Type 4 coupling protein DotL from Legionella pneumophila subsp. pneumophila (strain Philadelphia 1 / ATCC 33152 / DSM 7513).